A 288-amino-acid chain; its full sequence is NAD kinase (288 aa).

D73 serves as the catalytic Proton acceptor. Residues 73 to 74 (DG), R78, 144 to 145 (NE), D174, 185 to 190 (TAYSLS), and A209 contribute to the NAD(+) site.

Belongs to the NAD kinase family. A divalent metal cation is required as a cofactor.

The protein localises to the cytoplasm. It carries out the reaction NAD(+) + ATP = ADP + NADP(+) + H(+). Involved in the regulation of the intracellular balance of NAD and NADP, and is a key enzyme in the biosynthesis of NADP. Catalyzes specifically the phosphorylation on 2'-hydroxyl of the adenosine moiety of NAD to yield NADP. This is NAD kinase from Porphyromonas gingivalis (strain ATCC 33277 / DSM 20709 / CIP 103683 / JCM 12257 / NCTC 11834 / 2561).